The primary structure comprises 297 residues: tRNA dimethylallyltransferase (297 aa).

ATP is bound at residue 10–17 (GITASGKS). 12–17 (TASGKS) is a substrate binding site. Positions 36–39 (DSKQ) are interaction with substrate tRNA.

Belongs to the IPP transferase family. In terms of assembly, monomer. It depends on Mg(2+) as a cofactor.

It catalyses the reaction adenosine(37) in tRNA + dimethylallyl diphosphate = N(6)-dimethylallyladenosine(37) in tRNA + diphosphate. In terms of biological role, catalyzes the transfer of a dimethylallyl group onto the adenine at position 37 in tRNAs that read codons beginning with uridine, leading to the formation of N6-(dimethylallyl)adenosine (i(6)A). This Wolbachia sp. subsp. Brugia malayi (strain TRS) protein is tRNA dimethylallyltransferase.